A 435-amino-acid chain; its full sequence is Virulence factor PIT1 (435 aa).

Helical transmembrane passes span 33-53 (ETTTWNLPIMIAQALLVSEVI), 77-97 (IFFILIKYLTIFAVIFDILVT), 111-131 (WAWTSSTFYFMCSTLVFCVIG), 143-163 (VASWSLSVGLMGQFAVAMWTN), and 204-224 (TFWFLLYNTIFESSILMACCI). An N-linked (GlcNAc...) asparagine glycan is attached at Asn330. Residues 392-404 (SPQMPSKAQSQSI) show a composition bias toward polar residues. The disordered stretch occupies residues 392–435 (SPQMPSKAQSQSIPYKREVEVTVDMSPVPPPPGPSPAPLPAPYM). Pro residues predominate over residues 418–435 (PVPPPPGPSPAPLPAPYM).

O-mannosylated by PMT4. Is also N-glycosylated.

The protein localises to the cell membrane. Its function is as follows. Plasma membrane virulence factor required for spreading and inducing tumors in infected leaves. This Mycosarcoma maydis (Corn smut fungus) protein is Virulence factor PIT1.